Reading from the N-terminus, the 363-residue chain is Beta-1,3-N-acetylglucosaminyltransferase lunatic fringe (363 aa).

Topologically, residues 1–8 are cytoplasmic; that stretch reads MLKSCGRK. Residues 9-29 traverse the membrane as a helical; Signal-anchor for type II membrane protein segment; the sequence is LLLSLVGSMFTCLLVLMVEPP. Over 30 to 363 the chain is Lumenal; that stretch reads GRPGLARGEA…TPWCPSNVVY (334 aa). Arginine 113 serves as a coordination point for substrate. A glycan (N-linked (GlcNAc...) asparagine) is linked at asparagine 151. Cystine bridges form between cysteine 152–cysteine 163 and cysteine 181–cysteine 244. Position 185 (aspartate 185) interacts with substrate. Mn(2+) is bound at residue aspartate 186. The active site involves aspartate 274. Residue histidine 298 participates in Mn(2+) binding. A disulfide bridge links cysteine 348 with cysteine 357.

It belongs to the glycosyltransferase 31 family. Mn(2+) is required as a cofactor. Requires Co(2+) as cofactor. In terms of processing, a soluble form may be derived from the membrane form by proteolytic processing.

It is found in the golgi apparatus membrane. The catalysed reaction is 3-O-(alpha-L-fucosyl)-L-threonyl-[EGF-like domain protein] + UDP-N-acetyl-alpha-D-glucosamine = 3-O-(N-acetyl-beta-D-glucosaminyl-(1-&gt;3)-alpha-L-fucosyl)-L-threonyl-[EGF-like domain protein] + UDP + H(+). It carries out the reaction 3-O-(alpha-L-fucosyl)-L-seryl-[EGF-like domain protein] + UDP-N-acetyl-alpha-D-glucosamine = 3-O-(N-acetyl-beta-D-glucosaminyl-(1-&gt;3)-alpha-L-fucosyl)-L-seryl-[EGF-like domain protein] + UDP + H(+). Its function is as follows. Glycosyltransferase that initiates the elongation of O-linked fucose residues attached to EGF-like repeats in the extracellular domain of Notch molecules. Essential mediator of somite segmentation and patterning. The polypeptide is Beta-1,3-N-acetylglucosaminyltransferase lunatic fringe (LFNG) (Gallus gallus (Chicken)).